The primary structure comprises 285 residues: Probable nudix hydrolase C6G9.05 (285 aa).

Positions 114–254 (TRFASVLMPL…DLLYVEFNID (141 aa)) constitute a Nudix hydrolase domain. The Nudix box motif lies at 153–175 (GRVEPSDGSHYYAALRETYEEIG). Residues Glu-169 and Glu-173 each contribute to the Mg(2+) site.

This sequence belongs to the Nudix hydrolase family. PCD1 subfamily. The cofactor is Mn(2+). Requires Mg(2+) as cofactor.

Its function is as follows. Probably mediates the hydrolysis of some nucleoside diphosphate derivatives. In Schizosaccharomyces pombe (strain 972 / ATCC 24843) (Fission yeast), this protein is Probable nudix hydrolase C6G9.05.